Consider the following 426-residue polypeptide: MTEIVDIIAREILDSRGNPTVEVDVILEDGAFGRAAVPSGASTGAHEANEKRDGDKARYLGKGVQQAVDAVNGEIFDALSGVDAEDQRRVDNLMIELDGTPNKARLGANAILGVSLATAKAAAESAGLPLYKYVGGVNARVLPTPMMNIINGGAHADNPIDIQEFMILPTGAKDFREGLRMGAEIFHALKKALKDAGHNTNVGDEGGFAPNLASAEAALDFIVKAGEKAGYKAGDDFVLGLDVASTEFFKNGKYELEGEGKSLDPAAMVDYLAGLVAKFPILTIEDGMAEDDFDGWKLLTDTLGKKVQLVGDDLFVTNPKRLQMGLDKGLANSILVKVNQIGTLSETIDAVELAHRHGYTSVMSHRSGETEDSTIADLAVALNCGQIKTGSLARSDRTAKYNQLLRIQEMLDDQGVYAGRAALKGR.

Gln163 contributes to the (2R)-2-phosphoglycerate binding site. Glu205 functions as the Proton donor in the catalytic mechanism. Positions 242, 285, and 312 each coordinate Mg(2+). 4 residues coordinate (2R)-2-phosphoglycerate: Lys337, Arg366, Ser367, and Lys388. Residue Lys337 is the Proton acceptor of the active site.

Belongs to the enolase family. The cofactor is Mg(2+).

The protein resides in the cytoplasm. It is found in the secreted. The protein localises to the cell surface. It carries out the reaction (2R)-2-phosphoglycerate = phosphoenolpyruvate + H2O. The protein operates within carbohydrate degradation; glycolysis; pyruvate from D-glyceraldehyde 3-phosphate: step 4/5. Its function is as follows. Catalyzes the reversible conversion of 2-phosphoglycerate (2-PG) into phosphoenolpyruvate (PEP). It is essential for the degradation of carbohydrates via glycolysis. The polypeptide is Enolase (Caulobacter vibrioides (strain ATCC 19089 / CIP 103742 / CB 15) (Caulobacter crescentus)).